A 327-amino-acid chain; its full sequence is Phenylalanine--tRNA ligase alpha subunit (327 aa).

Mg(2+) is bound at residue Glu-252.

This sequence belongs to the class-II aminoacyl-tRNA synthetase family. Phe-tRNA synthetase alpha subunit type 1 subfamily. As to quaternary structure, tetramer of two alpha and two beta subunits. It depends on Mg(2+) as a cofactor.

Its subcellular location is the cytoplasm. It carries out the reaction tRNA(Phe) + L-phenylalanine + ATP = L-phenylalanyl-tRNA(Phe) + AMP + diphosphate + H(+). The protein is Phenylalanine--tRNA ligase alpha subunit of Klebsiella pneumoniae (strain 342).